The primary structure comprises 280 residues: Undecaprenyl-diphosphatase (280 aa).

A run of 8 helical transmembrane segments spans residues 1–21, 41–61, 87–107, 115–135, 147–167, 186–206, 226–246, and 260–280; these read MTILQAIVLAIVEGLTEFLPV, FVRAFTVMIQFGAILSVLVLY, FDLYWKLLIALVPAVILGFLF, LGSVWVVAVVLFLGGIFMLFV, ITYPKAFVIGLFQCLAIFLPG, KAAAEFSFFLAVPTMLGATLL, VLLVGNIVAFIVALAAIKFFI, and YRILVGGLLIVLMLSGVSLAV.

This sequence belongs to the UppP family.

The protein localises to the cell inner membrane. The catalysed reaction is di-trans,octa-cis-undecaprenyl diphosphate + H2O = di-trans,octa-cis-undecaprenyl phosphate + phosphate + H(+). Functionally, catalyzes the dephosphorylation of undecaprenyl diphosphate (UPP). Confers resistance to bacitracin. The chain is Undecaprenyl-diphosphatase from Porphyromonas gingivalis (strain ATCC BAA-308 / W83).